A 388-amino-acid polypeptide reads, in one-letter code: Chalcone synthase DIV (388 aa).

The active site involves cysteine 164.

Belongs to the thiolase-like superfamily. Chalcone/stilbene synthases family.

It catalyses the reaction (E)-4-coumaroyl-CoA + 3 malonyl-CoA + 3 H(+) = 2',4,4',6'-tetrahydroxychalcone + 3 CO2 + 4 CoA. It participates in secondary metabolite biosynthesis; flavonoid biosynthesis. Functionally, the primary product of this enzyme is 4,2',4',6'-tetrahydroxychalcone (also termed naringenin-chalcone or chalcone) which can under specific conditions spontaneously isomerize into naringenin. The sequence is that of Chalcone synthase DIV (CHS-DIV) from Ipomoea batatas (Sweet potato).